A 648-amino-acid polypeptide reads, in one-letter code: Calpain-5 (648 aa).

One can recognise a Calpain catalytic domain in the interval 28–353 (PFVDTLFPPT…FTDISLCQLF (326 aa)). Residues cysteine 83, histidine 252, and asparagine 290 contribute to the active site. Residues 354-509 (NTSVFSFSRS…VYSDEHIHFS (156 aa)) are domain III. The C2 domain maps to 502–625 (SDEHIHFSPL…ENRDTTLQLT (124 aa)).

The protein belongs to the peptidase C2 family. It depends on Ca(2+) as a cofactor. In terms of tissue distribution, expressed in neuronal, but not in GABA-ergic neurons, intestinal, hypodermal and excretory tissues.

In terms of biological role, required for the correct female sexual development of the soma and germline in hermaphrodite animals, while being fully dispensable in males. Has calcium-dependent proteolytic activity and is involved in the cleavage of tra-2, for which it acts as a potentiator. Capable of calcium-dependent autolysis. Part of the necrosis cell death pathway. Required for necrosis of intestinal cells induced by B.thuringiensis endotoxin Cry6Aa. This chain is Calpain-5, found in Caenorhabditis elegans.